A 306-amino-acid chain; its full sequence is Pantothenate kinase (306 aa).

Gly-90 to Ser-97 is a binding site for ATP.

This sequence belongs to the prokaryotic pantothenate kinase family.

The protein resides in the cytoplasm. It carries out the reaction (R)-pantothenate + ATP = (R)-4'-phosphopantothenate + ADP + H(+). Its pathway is cofactor biosynthesis; coenzyme A biosynthesis; CoA from (R)-pantothenate: step 1/5. This chain is Pantothenate kinase, found in Ligilactobacillus salivarius (strain UCC118) (Lactobacillus salivarius).